Here is a 184-residue protein sequence, read N- to C-terminus: Shikimate kinase (184 aa).

18 to 23 contacts ATP; sequence GAGKTT. Threonine 22 is a binding site for Mg(2+). Substrate is bound by residues aspartate 40, arginine 64, and glycine 86. Arginine 124 is an ATP binding site. Substrate is bound at residue arginine 143. Residue glutamine 160 participates in ATP binding.

This sequence belongs to the shikimate kinase family. Monomer. The cofactor is Mg(2+).

It is found in the cytoplasm. It carries out the reaction shikimate + ATP = 3-phosphoshikimate + ADP + H(+). It participates in metabolic intermediate biosynthesis; chorismate biosynthesis; chorismate from D-erythrose 4-phosphate and phosphoenolpyruvate: step 5/7. Functionally, catalyzes the specific phosphorylation of the 3-hydroxyl group of shikimic acid using ATP as a cosubstrate. This Chromobacterium violaceum (strain ATCC 12472 / DSM 30191 / JCM 1249 / CCUG 213 / NBRC 12614 / NCIMB 9131 / NCTC 9757 / MK) protein is Shikimate kinase.